A 269-amino-acid polypeptide reads, in one-letter code: 4-hydroxy-tetrahydrodipicolinate reductase (269 aa).

NAD(+)-binding positions include 8 to 13, E34, 98 to 100, and 122 to 125; these read GASGRM, GTT, and APNM. Residue H155 is the Proton donor/acceptor of the active site. H156 contacts (S)-2,3,4,5-tetrahydrodipicolinate. Catalysis depends on K159, which acts as the Proton donor. Position 165–166 (165–166) interacts with (S)-2,3,4,5-tetrahydrodipicolinate; sequence GT.

It belongs to the DapB family.

It is found in the cytoplasm. It carries out the reaction (S)-2,3,4,5-tetrahydrodipicolinate + NAD(+) + H2O = (2S,4S)-4-hydroxy-2,3,4,5-tetrahydrodipicolinate + NADH + H(+). The catalysed reaction is (S)-2,3,4,5-tetrahydrodipicolinate + NADP(+) + H2O = (2S,4S)-4-hydroxy-2,3,4,5-tetrahydrodipicolinate + NADPH + H(+). Its pathway is amino-acid biosynthesis; L-lysine biosynthesis via DAP pathway; (S)-tetrahydrodipicolinate from L-aspartate: step 4/4. Catalyzes the conversion of 4-hydroxy-tetrahydrodipicolinate (HTPA) to tetrahydrodipicolinate. The polypeptide is 4-hydroxy-tetrahydrodipicolinate reductase (Desulfotalea psychrophila (strain LSv54 / DSM 12343)).